Consider the following 350-residue polypeptide: Putative deoxyribonuclease-2 (350 aa).

Belongs to the DNase II family.

In Burkholderia pseudomallei (strain 1710b), this protein is Putative deoxyribonuclease-2.